Reading from the N-terminus, the 172-residue chain is Large ribosomal subunit protein uL10 (172 aa).

This sequence belongs to the universal ribosomal protein uL10 family. In terms of assembly, part of the ribosomal stalk of the 50S ribosomal subunit. The N-terminus interacts with L11 and the large rRNA to form the base of the stalk. The C-terminus forms an elongated spine to which L12 dimers bind in a sequential fashion forming a multimeric L10(L12)X complex.

Functionally, forms part of the ribosomal stalk, playing a central role in the interaction of the ribosome with GTP-bound translation factors. The chain is Large ribosomal subunit protein uL10 from Pelodictyon phaeoclathratiforme (strain DSM 5477 / BU-1).